The sequence spans 444 residues: UDP-N-acetylglucosamine 1-carboxyvinyltransferase (444 aa).

Residue 22–23 (KN) participates in phosphoenolpyruvate binding. Arg-94 contributes to the UDP-N-acetyl-alpha-D-glucosamine binding site. Asp-119 functions as the Proton donor in the catalytic mechanism. UDP-N-acetyl-alpha-D-glucosamine is bound by residues Asp-309 and Val-331.

It belongs to the EPSP synthase family. MurA subfamily.

The protein localises to the cytoplasm. It catalyses the reaction phosphoenolpyruvate + UDP-N-acetyl-alpha-D-glucosamine = UDP-N-acetyl-3-O-(1-carboxyvinyl)-alpha-D-glucosamine + phosphate. It functions in the pathway cell wall biogenesis; peptidoglycan biosynthesis. Its function is as follows. Cell wall formation. Adds enolpyruvyl to UDP-N-acetylglucosamine. This Chlamydia abortus (strain DSM 27085 / S26/3) (Chlamydophila abortus) protein is UDP-N-acetylglucosamine 1-carboxyvinyltransferase.